Consider the following 506-residue polypeptide: Protein P7 (506 aa).

RNA-binding regions lie at residues 128-249 (ISYL…GKRE) and 325-355 (DGSY…FKIS).

This sequence belongs to the phytoreovirus protein P7 family.

The protein resides in the virion. It localises to the host cytoplasm. In terms of biological role, probable component of the transcriptional machinery present in the inner capsid. Displays dsRNA binding activity and may play an important role in the sorting of viral RNA and virion assembly. Together with the RNA-directed RNA polymerase P1 and capping enzyme P5, forms an transcriptional complex positioned near the channels situated at each of the five-fold vertices of the core. This chain is Protein P7, found in Alopecurus aequalis (Barnyard grass).